Reading from the N-terminus, the 151-residue chain is Ubiquitin-conjugating enzyme E2 2 (151 aa).

The tract at residues 1 to 26 (MSTSARRRLMRDFKRMQTDPPAGVSA) is disordered. A UBC core domain is found at 4-150 (SARRRLMRDF…VRETVEKSWE (147 aa)). Residue cysteine 88 is the Glycyl thioester intermediate of the active site.

It belongs to the ubiquitin-conjugating enzyme family.

Its subcellular location is the cytoplasm. It localises to the nucleus. The enzyme catalyses S-ubiquitinyl-[E1 ubiquitin-activating enzyme]-L-cysteine + [E2 ubiquitin-conjugating enzyme]-L-cysteine = [E1 ubiquitin-activating enzyme]-L-cysteine + S-ubiquitinyl-[E2 ubiquitin-conjugating enzyme]-L-cysteine.. It functions in the pathway protein modification; protein ubiquitination. In terms of biological role, catalyzes the covalent attachment of ubiquitin to other proteins. Plays a role in transcription regulation by catalyzing the monoubiquitination of histone H2B to form H2BK123ub1. H2BK123ub1 gives a specific tag for epigenetic transcriptional activation and is also a prerequisite for H3K4me and H3K79me formation. Also involved in postreplication repair of UV-damaged DNA, in N-end rule-dependent protein degradation and in sporulation. This Aspergillus fumigatus (strain ATCC MYA-4609 / CBS 101355 / FGSC A1100 / Af293) (Neosartorya fumigata) protein is Ubiquitin-conjugating enzyme E2 2 (ubc2).